The primary structure comprises 152 residues: uncharacterized protein (152 aa).

Belongs to the transposase 8 family.

This is an uncharacterized protein from Sinorhizobium fredii (strain NBRC 101917 / NGR234).